Reading from the N-terminus, the 810-residue chain is E3 ubiquitin-protein ligase RNF10 (810 aa).

Over residues 1–31 (MPQSSPSAAATASDMDKNSGSSSSSASSGSS) the composition is skewed to low complexity. A disordered region spans residues 1–119 (MPQSSPSAAA…SFNGGRRDEV (119 aa)). Position 5 is a phosphoserine (serine 5). Residues 76 to 92 (NFINQSRRSNSQKSKTF) show a composition bias toward polar residues. The interaction with MEOX2 stretch occupies residues 101-185 (GGSSKLFSSS…FNKELFLQAN (85 aa)). The span at 104 to 113 (SKLFSSSFNG) shows a compositional bias: low complexity. A phosphoserine mark is found at serine 110 and serine 128. The RING-type zinc finger occupies 225–267 (CPICLYPPTAAKITRCGHIFCWACILHYLSLSEKTWSKCPICY). 4 disordered regions span residues 598-623 (KRKRQRQKKAREERRRERRIEMEENK), 652-674 (DSALGSTSTEGRGALSLSPLSRS), 722-759 (ADVWPKTAPKKDENTLGPPAPVDSDGESDNSDRVPVPS), and 775-810 (LDTPVTSDPLSEEKGGKKRKKQKQKLLFSTSVVHTK). Over residues 607-623 (AREERRRERRIEMEENK) the composition is skewed to basic and acidic residues. Positions 652–661 (DSALGSTSTE) are enriched in polar residues. A compositionally biased stretch (low complexity) spans 662 to 674 (GRGALSLSPLSRS). The span at 722–735 (ADVWPKTAPKKDEN) shows a compositional bias: basic and acidic residues. The segment covering 801-810 (LFSTSVVHTK) has biased composition (polar residues).

The protein belongs to the RNF10 family. As to quaternary structure, interacts with MEOX2.

Its subcellular location is the cytoplasm. The protein resides in the nucleus. The enzyme catalyses S-ubiquitinyl-[E2 ubiquitin-conjugating enzyme]-L-cysteine + [acceptor protein]-L-lysine = [E2 ubiquitin-conjugating enzyme]-L-cysteine + N(6)-ubiquitinyl-[acceptor protein]-L-lysine.. Its pathway is protein modification; protein ubiquitination. E3 ubiquitin-protein ligase that catalyzes monoubiquitination of 40S ribosomal proteins RPS2/us5 and RPS3/us3 in response to ribosome stalling. Part of a ribosome quality control that takes place when ribosomes have stalled during translation initiation (iRQC): RNF10 acts by mediating monoubiquitination of RPS2/us5 and RPS3/us3, promoting their degradation by the proteasome. Also promotes ubiquitination of 40S ribosomal proteins in response to ribosome stalling during translation elongation. The action of RNF10 in iRQC is counteracted by USP10. May also act as a transcriptional factor involved in the regulation of MAG (Myelin-associated glycoprotein) expression. Acts as a regulator of Schwann cell differentiation and myelination. The chain is E3 ubiquitin-protein ligase RNF10 (RNF10) from Bos taurus (Bovine).